A 133-amino-acid polypeptide reads, in one-letter code: Large-conductance mechanosensitive channel (133 aa).

Helical transmembrane passes span 14-34 and 67-87; these read VVDLAVGVVIGAAFGKIVSSL and GNFIQTIFDFLIIAAAIFMFV.

The protein belongs to the MscL family. As to quaternary structure, homopentamer.

It is found in the cell membrane. Functionally, channel that opens in response to stretch forces in the membrane lipid bilayer. May participate in the regulation of osmotic pressure changes within the cell. This is Large-conductance mechanosensitive channel from Bacillus cereus (strain AH187).